We begin with the raw amino-acid sequence, 404 residues long: Caspase-1 (404 aa).

The CARD domain maps to 1–91 (MADKVLKEKR…YLAGTLGLSA (91 aa)). Positions 1-119 (MADKVLKEKR…SFPAPQAVQD (119 aa)) are excised as a propeptide. Lys-134 is covalently cross-linked (Glycyl lysine isopeptide (Lys-Gly) (interchain with G-Cter in ubiquitin)). Residues His-237 and Cys-285 contribute to the active site. The propeptide at 298-316 (SVGVSGNLSLPTTEEFEDD) is interdomain linker. Ser-302 is subject to Phosphoserine.

This sequence belongs to the peptidase C14A family. As to quaternary structure, heterotetramer that consists of two anti-parallel arranged heterodimers, each one formed by a 20 kDa (Caspase-1 subunit p20) and a 10 kDa (Caspase-1 subunit p10) subunit. May be a component of the inflammasome, a protein complex which also includes PYCARD, CARD8 and NLRP2 and whose function would be the activation of pro-inflammatory caspases. Component of the AIM2 PANoptosome complex, a multiprotein complex that drives inflammatory cell death (PANoptosis). Interacts with CARD8; interacts with the released C-terminus of CARD8 which forms an inflammasome and directly activates CASP1 to promote pyroptosis. Both the p10 and p20 subunits interact with MEFV. Interacts with CARD17P/INCA and CARD18. Interacts with SERPINB1; this interaction regulates CASP1 activity. In terms of assembly, heterotetramer that consists of two anti-parallel arranged heterodimers, each one formed by a 20 kDa (Caspase-1 subunit p20) and a 10 kDa (Caspase-1 subunit p10) subunit. Can form a heterodimer with isoform epsilon which then has an inhibitory effect. Heterotetramer that consists of two anti-parallel arranged heterodimers, each one formed by a 20 kDa (Caspase-1 subunit p20) and a 10 kDa (Caspase-1 subunit p10) subunit. As to quaternary structure, can form a heterodimer with Caspase-1 subunit p20 which then has an inhibitory effect. The two subunits are derived from the precursor sequence by an autocatalytic mechanism. In terms of processing, ubiquitinated via 'Lys-11'-linked polyubiquitination. Deubiquitinated by USP8. Post-translationally, cleavage in the interdomain linker region is required to induce pyroptosis. In terms of tissue distribution, expressed in larger amounts in spleen and lung. Detected in liver, heart, small intestine, colon, thymus, prostate, skeletal muscle, peripheral blood leukocytes, kidney and testis. No expression in the brain.

It is found in the cytoplasm. The protein resides in the cell membrane. It catalyses the reaction Strict requirement for an Asp residue at position P1 and has a preferred cleavage sequence of Tyr-Val-Ala-Asp-|-.. Its activity is regulated as follows. (Microbial infection) Specifically inhibited by the cowpox virus Crma protein. Functionally, thiol protease involved in a variety of inflammatory processes by proteolytically cleaving other proteins, such as the precursors of the inflammatory cytokines interleukin-1 beta (IL1B) and interleukin 18 (IL18) as well as the pyroptosis inducer Gasdermin-D (GSDMD), into active mature peptides. Plays a key role in cell immunity as an inflammatory response initiator: once activated through formation of an inflammasome complex, it initiates a pro-inflammatory response through the cleavage of the two inflammatory cytokines IL1B and IL18, releasing the mature cytokines which are involved in a variety of inflammatory processes. Cleaves a tetrapeptide after an Asp residue at position P1. Also initiates pyroptosis, a programmed lytic cell death pathway, through cleavage of GSDMD. In contrast to cleavage of interleukin IL1B, recognition and cleavage of GSDMD is not strictly dependent on the consensus cleavage site but depends on an exosite interface on CASP1 that recognizes and binds the Gasdermin-D, C-terminal (GSDMD-CT) part. Cleaves and activates CASP7 in response to bacterial infection, promoting plasma membrane repair. Upon inflammasome activation, during DNA virus infection but not RNA virus challenge, controls antiviral immunity through the cleavage of CGAS, rendering it inactive. In apoptotic cells, cleaves SPHK2 which is released from cells and remains enzymatically active extracellularly. Apoptosis inactive. The polypeptide is Caspase-1 (CASP1) (Homo sapiens (Human)).